Consider the following 188-residue polypeptide: Elongation factor P (188 aa).

The protein belongs to the elongation factor P family.

It localises to the cytoplasm. It functions in the pathway protein biosynthesis; polypeptide chain elongation. Involved in peptide bond synthesis. Stimulates efficient translation and peptide-bond synthesis on native or reconstituted 70S ribosomes in vitro. Probably functions indirectly by altering the affinity of the ribosome for aminoacyl-tRNA, thus increasing their reactivity as acceptors for peptidyl transferase. The sequence is that of Elongation factor P (efp) from Rickettsia prowazekii (strain Madrid E).